We begin with the raw amino-acid sequence, 126 residues long: Glycine cleavage system H protein (126 aa).

One can recognise a Lipoyl-binding domain in the interval 22 to 104 (VATIGITEYA…YEKAWMVKVE (83 aa)). Position 63 is an N6-lipoyllysine (Lys-63).

Belongs to the GcvH family. As to quaternary structure, the glycine cleavage system is composed of four proteins: P, T, L and H. (R)-lipoate is required as a cofactor.

In terms of biological role, the glycine cleavage system catalyzes the degradation of glycine. The H protein shuttles the methylamine group of glycine from the P protein to the T protein. Functionally, is also involved in protein lipoylation via its role as an octanoyl/lipoyl carrier protein intermediate. This Staphylococcus aureus (strain JH1) protein is Glycine cleavage system H protein.